Reading from the N-terminus, the 97-residue chain is ATP-dependent Clp protease adapter protein ClpS (97 aa).

The protein belongs to the ClpS family. Binds to the N-terminal domain of the chaperone ClpA.

Its function is as follows. Involved in the modulation of the specificity of the ClpAP-mediated ATP-dependent protein degradation. The protein is ATP-dependent Clp protease adapter protein ClpS of Nostoc sp. (strain PCC 7120 / SAG 25.82 / UTEX 2576).